We begin with the raw amino-acid sequence, 250 residues long: Short-chain dehydrogenase RED3 (250 aa).

Positions 16, 35, 63, and 91 each coordinate NADP(+). Catalysis depends on proton donor residues serine 145 and tyrosine 164. The NADP(+) site is built by tyrosine 164, lysine 168, valine 195, and serine 197. Residue lysine 168 is the Lowers pKa of active site Tyr of the active site.

Belongs to the short-chain dehydrogenases/reductases (SDR) family.

The protein operates within polyketide biosynthesis. In terms of biological role, short-chain dehydrogenase; part of the gene cluster that mediates the biosynthesis of pyriculol and pyriculariol, two heptaketides that induce lesion formation upon application on rice leaves but are dispensable for pathogenicity. The highly reducing polyketide synthase synthesizes the heptaketide backbone of pyriculol and pyriculariol. Pyriculol and pyriculariol contain several hydroxyl moieties and double bonds, so it can be assumed that several reduction steps occur during biosynthesis. These reactions could be executed by PKS19 itself or partly by the tailoring enzymes OXR1, OXR2, RED1, RED2 or RED3, identified within the cluster. The FAD-linked oxidoreductase OXR1 is the only tailoring enzyme for which the function has been determined yet, and is involved in the oxidation of dihydropyriculol and dihydropyriculariol into pyriculol and pyriculariol, respectively. In Pyricularia oryzae (strain 70-15 / ATCC MYA-4617 / FGSC 8958) (Rice blast fungus), this protein is Short-chain dehydrogenase RED3.